A 730-amino-acid chain; its full sequence is Elongation factor 2 (730 aa).

In terms of domain architecture, tr-type G spans 18-238; it reads DQIRNFGVIA…YSEGKVDELV (221 aa). Residues 27–34, 93–97, and 147–150 each bind GTP; these read AHVDHGKT, DTPGH, and NKVD. A Diphthamide modification is found at H595. Residues 711–730 form a disordered region; it reads RKRKGLAPDPPTVSEFIDRE.

This sequence belongs to the TRAFAC class translation factor GTPase superfamily. Classic translation factor GTPase family. EF-G/EF-2 subfamily.

Its subcellular location is the cytoplasm. Functionally, catalyzes the GTP-dependent ribosomal translocation step during translation elongation. During this step, the ribosome changes from the pre-translocational (PRE) to the post-translocational (POST) state as the newly formed A-site-bound peptidyl-tRNA and P-site-bound deacylated tRNA move to the P and E sites, respectively. Catalyzes the coordinated movement of the two tRNA molecules, the mRNA and conformational changes in the ribosome. In Cenarchaeum symbiosum (strain A), this protein is Elongation factor 2.